Reading from the N-terminus, the 107-residue chain is Universal stress protein B homolog (107 aa).

Transmembrane regions (helical) follow at residues 6–26 and 86–106; these read IILF…LTAL and VREL…AAFL.

The protein belongs to the universal stress protein B family.

It localises to the cell inner membrane. The sequence is that of Universal stress protein B homolog from Vibrio vulnificus (strain CMCP6).